The chain runs to 399 residues: Exodeoxyribonuclease 7 large subunit (399 aa).

It belongs to the XseA family. As to quaternary structure, heterooligomer composed of large and small subunits.

The protein resides in the cytoplasm. It carries out the reaction Exonucleolytic cleavage in either 5'- to 3'- or 3'- to 5'-direction to yield nucleoside 5'-phosphates.. Functionally, bidirectionally degrades single-stranded DNA into large acid-insoluble oligonucleotides, which are then degraded further into small acid-soluble oligonucleotides. This chain is Exodeoxyribonuclease 7 large subunit, found in Clostridium botulinum (strain Eklund 17B / Type B).